We begin with the raw amino-acid sequence, 183 residues long: ATP synthase subunit delta (183 aa).

This sequence belongs to the ATPase delta chain family. As to quaternary structure, F-type ATPases have 2 components, F(1) - the catalytic core - and F(0) - the membrane proton channel. F(1) has five subunits: alpha(3), beta(3), gamma(1), delta(1), epsilon(1). F(0) has three main subunits: a(1), b(2) and c(10-14). The alpha and beta chains form an alternating ring which encloses part of the gamma chain. F(1) is attached to F(0) by a central stalk formed by the gamma and epsilon chains, while a peripheral stalk is formed by the delta and b chains.

The protein resides in the cell membrane. Functionally, f(1)F(0) ATP synthase produces ATP from ADP in the presence of a proton or sodium gradient. F-type ATPases consist of two structural domains, F(1) containing the extramembraneous catalytic core and F(0) containing the membrane proton channel, linked together by a central stalk and a peripheral stalk. During catalysis, ATP synthesis in the catalytic domain of F(1) is coupled via a rotary mechanism of the central stalk subunits to proton translocation. This protein is part of the stalk that links CF(0) to CF(1). It either transmits conformational changes from CF(0) to CF(1) or is implicated in proton conduction. In Oenococcus oeni (strain ATCC BAA-331 / PSU-1), this protein is ATP synthase subunit delta.